A 277-amino-acid polypeptide reads, in one-letter code: Putative phosphoenolpyruvate synthase regulatory protein (277 aa).

G157–T164 contributes to the ADP binding site.

It belongs to the pyruvate, phosphate/water dikinase regulatory protein family. PSRP subfamily.

The catalysed reaction is [pyruvate, water dikinase] + ADP = [pyruvate, water dikinase]-phosphate + AMP + H(+). The enzyme catalyses [pyruvate, water dikinase]-phosphate + phosphate + H(+) = [pyruvate, water dikinase] + diphosphate. In terms of biological role, bifunctional serine/threonine kinase and phosphorylase involved in the regulation of the phosphoenolpyruvate synthase (PEPS) by catalyzing its phosphorylation/dephosphorylation. The protein is Putative phosphoenolpyruvate synthase regulatory protein of Erwinia tasmaniensis (strain DSM 17950 / CFBP 7177 / CIP 109463 / NCPPB 4357 / Et1/99).